The sequence spans 287 residues: Phosphatidylserine decarboxylase proenzyme (287 aa).

Active-site charge relay system; for autoendoproteolytic cleavage activity residues include Asp90, His147, and Ser253. Ser253 acts as the Schiff-base intermediate with substrate; via pyruvic acid; for decarboxylase activity in catalysis. Ser253 bears the Pyruvic acid (Ser); by autocatalysis mark.

This sequence belongs to the phosphatidylserine decarboxylase family. PSD-B subfamily. Prokaryotic type I sub-subfamily. Heterodimer of a large membrane-associated beta subunit and a small pyruvoyl-containing alpha subunit. It depends on pyruvate as a cofactor. Is synthesized initially as an inactive proenzyme. Formation of the active enzyme involves a self-maturation process in which the active site pyruvoyl group is generated from an internal serine residue via an autocatalytic post-translational modification. Two non-identical subunits are generated from the proenzyme in this reaction, and the pyruvate is formed at the N-terminus of the alpha chain, which is derived from the carboxyl end of the proenzyme. The autoendoproteolytic cleavage occurs by a canonical serine protease mechanism, in which the side chain hydroxyl group of the serine supplies its oxygen atom to form the C-terminus of the beta chain, while the remainder of the serine residue undergoes an oxidative deamination to produce ammonia and the pyruvoyl prosthetic group on the alpha chain. During this reaction, the Ser that is part of the protease active site of the proenzyme becomes the pyruvoyl prosthetic group, which constitutes an essential element of the active site of the mature decarboxylase.

It is found in the cell membrane. The enzyme catalyses a 1,2-diacyl-sn-glycero-3-phospho-L-serine + H(+) = a 1,2-diacyl-sn-glycero-3-phosphoethanolamine + CO2. The protein operates within phospholipid metabolism; phosphatidylethanolamine biosynthesis; phosphatidylethanolamine from CDP-diacylglycerol: step 2/2. In terms of biological role, catalyzes the formation of phosphatidylethanolamine (PtdEtn) from phosphatidylserine (PtdSer). This is Phosphatidylserine decarboxylase proenzyme from Aliivibrio salmonicida (strain LFI1238) (Vibrio salmonicida (strain LFI1238)).